A 485-amino-acid polypeptide reads, in one-letter code: Betaine aldehyde dehydrogenase (485 aa).

K(+) contacts are provided by Thr23, Ile24, and Asp90. 147-149 (GAW) is an NAD(+) binding site. The Charge relay system role is filled by Lys159. NAD(+) is bound by residues 173–176 (KPSE) and 226–229 (EVGT). A K(+)-binding site is contributed by Leu241. Catalysis depends on Glu247, which acts as the Proton acceptor. NAD(+) contacts are provided by Gly249, Cys281, and Glu382. The Nucleophile role is filled by Cys281. The residue at position 281 (Cys281) is a Cysteine sulfenic acid (-SOH). K(+)-binding residues include Lys452 and Gly455. Glu459 serves as the catalytic Charge relay system.

Belongs to the aldehyde dehydrogenase family. As to quaternary structure, dimer of dimers. Requires K(+) as cofactor.

It carries out the reaction betaine aldehyde + NAD(+) + H2O = glycine betaine + NADH + 2 H(+). It participates in amine and polyamine biosynthesis; betaine biosynthesis via choline pathway; betaine from betaine aldehyde: step 1/1. Involved in the biosynthesis of the osmoprotectant glycine betaine. Catalyzes the irreversible oxidation of betaine aldehyde to the corresponding acid. This chain is Betaine aldehyde dehydrogenase, found in Marinomonas sp. (strain MWYL1).